The following is a 125-amino-acid chain: UPF0538 protein C2C4.04c (125 aa).

It belongs to the UPF0538 family.

The chain is UPF0538 protein C2C4.04c from Schizosaccharomyces pombe (strain 972 / ATCC 24843) (Fission yeast).